A 767-amino-acid chain; its full sequence is GPI ethanolamine phosphate transferase 2 (767 aa).

Residues Asn-186 and Asn-401 are each glycosylated (N-linked (GlcNAc...) asparagine). 2 consecutive transmembrane segments (helical) span residues 407 to 427 (LGLFVAALAVLLSFFPAYGLG) and 434 to 454 (VTFLMLIIISYGGMMFASSYV). N-linked (GlcNAc...) asparagine glycosylation is present at Asn-490. 3 helical membrane-spanning segments follow: residues 513–533 (ILWALIILTYFDTCMHLCLNS), 538–558 (IWRSAAILTTIAAFFFKLVFV), and 595–615 (IPIFLMFRLQAIILDFLKMSA). The N-linked (GlcNAc...) asparagine glycan is linked to Asn-627. 3 helical membrane passes run 655–675 (SVVLVGVLTFISNWAGPIWWA), 695–715 (TLLTFHAATSLMSVMAACTML), and 733–755 (LAWTILNHMFINLPATANVSQVL).

This sequence belongs to the PIGG/PIGN/PIGO family. PIGG subfamily.

Its subcellular location is the endoplasmic reticulum membrane. Its pathway is glycolipid biosynthesis; glycosylphosphatidylinositol-anchor biosynthesis. Its function is as follows. Ethanolamine phosphate transferase involved in glycosylphosphatidylinositol-anchor biosynthesis. Transfers ethanolamine phosphate to the GPI second mannose. In Aspergillus fumigatus (strain ATCC MYA-4609 / CBS 101355 / FGSC A1100 / Af293) (Neosartorya fumigata), this protein is GPI ethanolamine phosphate transferase 2 (las21).